A 437-amino-acid polypeptide reads, in one-letter code: Elongation factor 1-gamma (437 aa).

Ala2 bears the N-acetylalanine mark. The GST N-terminal domain maps to 2–87 (AAGTLYTYPE…YVSNEELRGS (86 aa)). One can recognise a GST C-terminal domain in the interval 88 to 216 (TPEAAAQVVQ…VKLCEKMAQF (129 aa)). An N6-acetyllysine mark is found at Lys147 and Lys212. Over residues 221-254 (FAESQPKKDTPRKEKGSREEKQKPQAERKEEKKA) the composition is skewed to basic and acidic residues. The interval 221–268 (FAESQPKKDTPRKEKGSREEKQKPQAERKEEKKAAAPAPEEEMDECEQ) is disordered. Lys253 is covalently cross-linked (Glycyl lysine isopeptide (Lys-Gly) (interchain with G-Cter in SUMO1)). Residues 276-437 (AKDPFAHLPK…KAFNQGKIFK (162 aa)) form the EF-1-gamma C-terminal domain. Lys285 participates in a covalent cross-link: Glycyl lysine isopeptide (Lys-Gly) (interchain with G-Cter in SUMO2). Lys401 carries the N6-acetyllysine modification. Lys434 is subject to N6-acetyllysine; alternate. Position 434 is an N6-malonyllysine; alternate (Lys434).

EF-1 is composed of four subunits: alpha, beta, delta, and gamma.

Its function is as follows. Probably plays a role in anchoring the complex to other cellular components. In Equus caballus (Horse), this protein is Elongation factor 1-gamma (EEF1G).